A 630-amino-acid chain; its full sequence is MKGQETRGFQSEVKQLLQLMIHSLYSNKEIFLRELISNASDAADKLRFRALSVPKLYENDGELRVRLSFDKEKRCITISDNGIGMTRDEVIDNLGTIAKSGTKAFLESIGSDQAKDSQLIGQFGVGFYSAFIVSDKVTVRTRAAGASIDQGVFWESAGEGDYTIADIEKETRGTEITLHLREGEDEFLNDWRLRSVISKYSDHIALPVEIETKNKSEEEGEEDTVTWEKINKAQALWTRGKSEITDEEYKEFYKHISHDFTDPLIWSHNRVEGKQEYTSMLYIPSQAPWDMWNREHKHGLKLYVQRVFIMDDAEQFMPNYLRFVRGLIDSNDLPLNVSREILQDNSITRNLRNALTKRALQMLDKLAKDDAEKYQQFWQQFGLVMKEGPAEDSTNKEAIAKLLRFASTHNDSSAQTVSLEEYVSRMTEGQDKIYYITADSYAAAKNSPHLELFRKKGIEVLLLSERIDEWMMGYLTDFDGKKFQSVSKADESLDKLADENKAEQEEIEKQLEPFVERVKTLLGDRVKEVKLTHRLTDTPAIVTTNVDEMSTQMAKLFAAAGQQVPDVKYNFELNPDHQLVKLAADISDEVQFADWIELLLDQALFAERGTLEDPNQFIRRMNQLLLSEKA.

Residues 1–339 form an a; substrate-binding region; that stretch reads MKGQETRGFQ…SNDLPLNVSR (339 aa). A b region spans residues 340 to 555; sequence EILQDNSITR…VDEMSTQMAK (216 aa). Residues 556–630 are c; the sequence is LFAAAGQQVP…MNQLLLSEKA (75 aa).

It belongs to the heat shock protein 90 family. In terms of assembly, homodimer.

It localises to the cytoplasm. In terms of biological role, molecular chaperone. Has ATPase activity. This chain is Chaperone protein HtpG, found in Photorhabdus laumondii subsp. laumondii (strain DSM 15139 / CIP 105565 / TT01) (Photorhabdus luminescens subsp. laumondii).